A 66-amino-acid polypeptide reads, in one-letter code: Large ribosomal subunit protein bL35 (66 aa).

Residues 1 to 26 are compositionally biased toward basic residues; the sequence is MPKMKTHRGGAKRVKRTGSGKLKRSR. Disordered stretches follow at residues 1 to 28 and 36 to 55; these read MPKMKTHRGGAKRVKRTGSGKLKRSRAY and KSTKQKRGLRKASLVSKGDQ.

It belongs to the bacterial ribosomal protein bL35 family.

The polypeptide is Large ribosomal subunit protein bL35 (Macrococcus caseolyticus (strain JCSC5402) (Macrococcoides caseolyticum)).